The primary structure comprises 353 residues: UPF0283 membrane protein YcjF (353 aa).

Residues 1 to 19 (MSEPLKPRIDFAEPLKEEP) show a composition bias toward basic and acidic residues. Positions 1 to 35 (MSEPLKPRIDFAEPLKEEPTSAFKAQQTFSEAESR) are disordered. 3 helical membrane passes run 70–90 (MVMGGLALFGASVVGQGVQWT), 100–120 (VALGGCAAGALIIGAGVGSVV), and 213–233 (ESTLMIAVSSLALVDMAFIAW).

Belongs to the UPF0283 family.

The protein localises to the cell inner membrane. The sequence is that of UPF0283 membrane protein YcjF from Salmonella gallinarum (strain 287/91 / NCTC 13346).